The following is a 23-amino-acid chain: Superoxide dismutase [Mn], mitochondrial (23 aa).

It belongs to the iron/manganese superoxide dismutase family. As to quaternary structure, homotetramer. Requires Mn(2+) as cofactor.

The protein resides in the mitochondrion matrix. The enzyme catalyses 2 superoxide + 2 H(+) = H2O2 + O2. Functionally, destroys superoxide anion radicals which are normally produced within the cells and which are toxic to biological systems. The polypeptide is Superoxide dismutase [Mn], mitochondrial (Aquarana catesbeiana (American bullfrog)).